We begin with the raw amino-acid sequence, 137 residues long: uncharacterized protein (137 aa).

Residues 4-21 form a helical membrane-spanning segment; the sequence is ISWQIVLAVIGVVAGFII.

It localises to the membrane. This is an uncharacterized protein from Archaeoglobus fulgidus (strain ATCC 49558 / DSM 4304 / JCM 9628 / NBRC 100126 / VC-16).